Here is a 736-residue protein sequence, read N- to C-terminus: Zinc finger CCCH domain-containing protein 14 (736 aa).

An N-acetylmethionine modification is found at Met1. Residues 77-103 are compositionally biased toward polar residues; that stretch reads TTEPSSLKSPDTSIFDSNVPSNKSSFS. The interval 77–153 is disordered; the sequence is TTEPSSLKSP…RHSYDDGAST (77 aa). The residue at position 85 (Ser85) is a Phosphoserine. Glycyl lysine isopeptide (Lys-Gly) (interchain with G-Cter in SUMO2) cross-links involve residues Lys99, Lys139, Lys175, and Lys198. The span at 123-148 shows a compositional bias: basic and acidic residues; sequence RPEKRDSRVSTSSQEHKSTNVRHSYD. Position 240 is a phosphoserine (Ser240). Residues Lys245, Lys283, and Lys295 each participate in a glycyl lysine isopeptide (Lys-Gly) (interchain with G-Cter in SUMO2) cross-link. Positions 308–350 are disordered; that stretch reads FSHDGEEEEEDEDYGTRVGSLSSSVSVPAKPERRPSLPPSKQA. Ser309, Ser327, and Ser343 each carry phosphoserine. Lys357 carries the N6-acetyllysine; alternate modification. A Glycyl lysine isopeptide (Lys-Gly) (interchain with G-Cter in SUMO2); alternate cross-link involves residue Lys357. Over residues 367–380 the composition is skewed to polar residues; sequence TKTTNYPAVPQKQT. The interval 367-386 is disordered; it reads TKTTNYPAVPQKQTLPVAPR. Residue Lys378 forms a Glycyl lysine isopeptide (Lys-Gly) (interchain with G-Cter in SUMO2) linkage. 2 positions are modified to phosphoserine: Ser390 and Ser409. The interval 400–420 is disordered; sequence QGQNRAPRISPPVKEEEAKGD. Glycyl lysine isopeptide (Lys-Gly) (interchain with G-Cter in SUMO2) cross-links involve residues Lys413 and Lys489. Phosphoserine is present on residues Ser498, Ser515, Ser527, and Ser620. 5 consecutive C3H1-type zinc fingers follow at residues 595–620, 621–640, 641–656, 682–699, and 701–719; these read EKLL…HPIS, PCKA…VHPN, CKYD…PFTH, CRYF…YHPK, and CRFN…HPTI.

It belongs to the ZC3H14 family. In terms of assembly, homodimer; facilitating circular RNAs (circRNAs) formation. Associates with the spliceosome. Interacts with HOOK2. Interacts with ZFC3H1 in a RNase-sensitive manner.

It localises to the nucleus speckle. RNA-binding protein involved in the biogenesis of circular RNAs (circRNAs), which are produced by back-splicing circularization of pre-mRNAs. Acts by binding to both exon-intron boundary and 3'-UTR of pre-mRNAs to promote circRNA biogenesis through dimerization and the association with the spliceosome. Required for spermatogenesis via involvement in circRNA biogenesis. Regulates the pre-mRNA processing of ATP5MC1; preventing its degradation. Also binds the poly(A) tail of mRNAs; controlling poly(A) length in neuronal cells. In Rattus norvegicus (Rat), this protein is Zinc finger CCCH domain-containing protein 14.